The following is a 2534-amino-acid chain: Highly reducing polyketide synthase easB (2534 aa).

Residues 1-49 (MSPASRSRVEIADSESDSERLSSSPWSILSDNDSNTSDERSTRAGPGSL) form a disordered region. Residues 49 to 470 (LEPIAVIGIG…GTNAHVIIDA (422 aa)) enclose the Ketosynthase family 3 (KS3) domain. Catalysis depends on for beta-ketoacyl synthase activity residues Cys222, His356, and His396. Residues 587-885 (IFSGQGAQYA…LSGPVNQILK (299 aa)) form a malonyl-CoA:ACP transacylase (MAT) domain region. The tract at residues 973 to 1111 (HELLGTLSAD…GLVQAEVDSV (139 aa)) is N-terminal hotdog fold. The tract at residues 973 to 1273 (HELLGTLSAD…QGIRVTSLGG (301 aa)) is dehydratase (DH) domain. A PKS/mFAS DH domain is found at 973 to 1277 (HELLGTLSAD…VTSLGGDVAA (305 aa)). The active-site Proton acceptor; for dehydratase activity is His1005. Residues 1131–1277 (THGTIPQKFY…VTSLGGDVAA (147 aa)) form a C-terminal hotdog fold region. The active-site Proton donor; for dehydratase activity is the Asp1193. A methyltransferase (CMet) domain region spans residues 1395–1625 (KTSALSLLTK…VFISTAPFPR (231 aa)). The tract at residues 1834-2146 (GLLETIRWKD…AGKHTGKIVL (313 aa)) is enoyl reductase (ER) domain. Residues 2452 to 2529 (EAVHIVTNAI…QLAAIVAKES (78 aa)) form the Carrier domain. Positions 2453–2526 (AVHIVTNAIL…SISQLAAIVA (74 aa)) are ketoreductase (KR) domain. Position 2489 is an O-(pantetheine 4'-phosphoryl)serine (Ser2489).

It functions in the pathway antibiotic biosynthesis. In terms of biological role, polyketide synthase; part of the gene cluster that mediates the biosynthesis of emericellamides, secondary metabolites acting as antibiotics. The biosynthesis of emericellamides initiates from the highly reducing polyketide synthase easB which catalyzes the formation of the linear polyketide chain. EasB produces several polyketides that can be further processed by the downstream enzymes. The polyketides are released from easB as linear polyketide carboxylic acids, which are converted to CoA thioesters by the acyl-CoA ligase easD. The substrates are then loaded onto the acyltransferase easC, which shuttles them to the first thiolation (T) domain of the nonribosomal peptide synthetase easA. EasA then performs condensation of the polyketides with one glycine, two alanine, one valine and one leucine residues. A last step of cyclization leads to the production of emericellamides. This chain is Highly reducing polyketide synthase easB, found in Emericella nidulans (strain FGSC A4 / ATCC 38163 / CBS 112.46 / NRRL 194 / M139) (Aspergillus nidulans).